The following is a 701-amino-acid chain: Elongation factor G 1 (701 aa).

The region spanning 8–290 is the tr-type G domain; the sequence is VRYRNIGICA…AVVEYLPAPT (283 aa). GTP is bound by residues 17-24, 88-92, and 142-145; these read AHVDAGKT, DTPGH, and NKMD.

This sequence belongs to the TRAFAC class translation factor GTPase superfamily. Classic translation factor GTPase family. EF-G/EF-2 subfamily.

It is found in the cytoplasm. Catalyzes the GTP-dependent ribosomal translocation step during translation elongation. During this step, the ribosome changes from the pre-translocational (PRE) to the post-translocational (POST) state as the newly formed A-site-bound peptidyl-tRNA and P-site-bound deacylated tRNA move to the P and E sites, respectively. Catalyzes the coordinated movement of the two tRNA molecules, the mRNA and conformational changes in the ribosome. This chain is Elongation factor G 1, found in Saccharophagus degradans (strain 2-40 / ATCC 43961 / DSM 17024).